The sequence spans 348 residues: 4-hydroxy-3-methylbut-2-enyl diphosphate reductase (348 aa).

Cys-21 contributes to the [4Fe-4S] cluster binding site. Residues His-50 and His-86 each contribute to the (2E)-4-hydroxy-3-methylbut-2-enyl diphosphate site. Dimethylallyl diphosphate-binding residues include His-50 and His-86. 2 residues coordinate isopentenyl diphosphate: His-50 and His-86. Residue Cys-108 coordinates [4Fe-4S] cluster. Position 136 (His-136) interacts with (2E)-4-hydroxy-3-methylbut-2-enyl diphosphate. Dimethylallyl diphosphate is bound at residue His-136. His-136 serves as a coordination point for isopentenyl diphosphate. The active-site Proton donor is the Glu-138. Residue Thr-177 participates in (2E)-4-hydroxy-3-methylbut-2-enyl diphosphate binding. Position 207 (Cys-207) interacts with [4Fe-4S] cluster. Residues Ser-235, Ser-236, Asn-237, and Ser-280 each contribute to the (2E)-4-hydroxy-3-methylbut-2-enyl diphosphate site. Dimethylallyl diphosphate-binding residues include Ser-235, Ser-236, Asn-237, and Ser-280. Isopentenyl diphosphate is bound by residues Ser-235, Ser-236, Asn-237, and Ser-280.

The protein belongs to the IspH family. The cofactor is [4Fe-4S] cluster.

It carries out the reaction isopentenyl diphosphate + 2 oxidized [2Fe-2S]-[ferredoxin] + H2O = (2E)-4-hydroxy-3-methylbut-2-enyl diphosphate + 2 reduced [2Fe-2S]-[ferredoxin] + 2 H(+). It catalyses the reaction dimethylallyl diphosphate + 2 oxidized [2Fe-2S]-[ferredoxin] + H2O = (2E)-4-hydroxy-3-methylbut-2-enyl diphosphate + 2 reduced [2Fe-2S]-[ferredoxin] + 2 H(+). The protein operates within isoprenoid biosynthesis; dimethylallyl diphosphate biosynthesis; dimethylallyl diphosphate from (2E)-4-hydroxy-3-methylbutenyl diphosphate: step 1/1. It functions in the pathway isoprenoid biosynthesis; isopentenyl diphosphate biosynthesis via DXP pathway; isopentenyl diphosphate from 1-deoxy-D-xylulose 5-phosphate: step 6/6. Its function is as follows. Catalyzes the conversion of 1-hydroxy-2-methyl-2-(E)-butenyl 4-diphosphate (HMBPP) into a mixture of isopentenyl diphosphate (IPP) and dimethylallyl diphosphate (DMAPP). Acts in the terminal step of the DOXP/MEP pathway for isoprenoid precursor biosynthesis. This chain is 4-hydroxy-3-methylbut-2-enyl diphosphate reductase, found in Agrobacterium fabrum (strain C58 / ATCC 33970) (Agrobacterium tumefaciens (strain C58)).